Consider the following 343-residue polypeptide: D-alanine--D-alanine ligase (343 aa).

Residues 129–335 form the ATP-grasp domain; it reads KYVLEHFNIK…YSKLIDELIE (207 aa). Residue 162–217 coordinates ATP; the sequence is ENKLGYAVFIKPSNSGSSVGITKAHNRKELEAGLEEAMKYDRKILVEEALNAREIE. 3 residues coordinate Mg(2+): D288, E302, and N304.

The protein belongs to the D-alanine--D-alanine ligase family. Requires Mg(2+) as cofactor. Mn(2+) serves as cofactor.

The protein localises to the cytoplasm. It catalyses the reaction 2 D-alanine + ATP = D-alanyl-D-alanine + ADP + phosphate + H(+). The protein operates within cell wall biogenesis; peptidoglycan biosynthesis. Its function is as follows. Cell wall formation. This is D-alanine--D-alanine ligase from Clostridium acetobutylicum (strain ATCC 824 / DSM 792 / JCM 1419 / IAM 19013 / LMG 5710 / NBRC 13948 / NRRL B-527 / VKM B-1787 / 2291 / W).